A 67-amino-acid polypeptide reads, in one-letter code: Ubiquinol-cytochrome c reductase complex assembly factor 6 (67 aa).

At Met1–Ser8 the chain is on the mitochondrial matrix side. The chain crosses the membrane as a helical; Signal-anchor for type II membrane protein span at residues Ala9 to Ala25. Residues Gln26–Gln67 are Mitochondrial intermembrane-facing.

The protein belongs to the UQCC6 family. As to quaternary structure, interacts with UQCRC1. Interacts with UQCRQ. Interacts with UQCC5. Forms a complex, named COMB/coordinator of mitochondrial CYTB biogenesis, composed of UQCC1, UQCC2, UQCC4, UQCC5 and UQCC6; stabilizes nascent cytochrome b/MT-CYB and promotes its membrane insertion. Forms a complex, named COMA, composed of UQCC1, UQCC2 and UQCC4; activates MT-CYB translation. Forms a complex, named COMC, composed of UQCC1, UQCC2; UQCC3 and UQCC4; mediates MT-CYB hemylation and association with the first nuclear-encoded complex III subunit UQCRQ. Interacts with MT-CYB. Highly expressed in brown adipose, cardiac and skeletal muscle (at protein level).

It is found in the mitochondrion inner membrane. Functionally, required for the assembly and stability of the mitochondrial ubiquinol-cytochrome c reductase complex (complex III or cytochrome b-c1 complex), a multisubunit transmembrane complex that is part of the mitochondrial electron transport chain (ETC) which drives oxidative phosphorylation. Mediates early complex III biogenesis. Participates in regulating the levels of electron transport chain proteins, and therefore energy supply, in response to changes in energy demand. Also required for cytochrome c oxidase complex (complex IV) assembly. This chain is Ubiquinol-cytochrome c reductase complex assembly factor 6, found in Mus musculus (Mouse).